Reading from the N-terminus, the 835-residue chain is Protein translocase subunit SecA (835 aa).

Residues Q85, G103–T107, and D492 contribute to the ATP site. Residues V788–V807 are disordered. Zn(2+)-binding residues include C819, C821, C830, and C831.

It belongs to the SecA family. Monomer and homodimer. Part of the essential Sec protein translocation apparatus which comprises SecA, SecYEG and auxiliary proteins SecDF. Other proteins may also be involved. The cofactor is Zn(2+).

Its subcellular location is the cell membrane. It is found in the cytoplasm. The enzyme catalyses ATP + H2O + cellular proteinSide 1 = ADP + phosphate + cellular proteinSide 2.. Its function is as follows. Part of the Sec protein translocase complex. Interacts with the SecYEG preprotein conducting channel. Has a central role in coupling the hydrolysis of ATP to the transfer of proteins into and across the cell membrane, serving as an ATP-driven molecular motor driving the stepwise translocation of polypeptide chains across the membrane. This chain is Protein translocase subunit SecA, found in Bacillus cereus (strain B4264).